The primary structure comprises 216 residues: Phosphoenolpyruvate guanylyltransferase (216 aa).

3 residues coordinate phosphoenolpyruvate: T139, G155, and S158.

Belongs to the CofC family.

It carries out the reaction phosphoenolpyruvate + GTP + H(+) = enolpyruvoyl-2-diphospho-5'-guanosine + diphosphate. It functions in the pathway cofactor biosynthesis; coenzyme F420 biosynthesis. In terms of biological role, guanylyltransferase that catalyzes the activation of phosphoenolpyruvate (PEP) as enolpyruvoyl-2-diphospho-5'-guanosine, via the condensation of PEP with GTP. It is involved in the biosynthesis of coenzyme F420, a hydride carrier cofactor. This chain is Phosphoenolpyruvate guanylyltransferase, found in Streptomyces avermitilis (strain ATCC 31267 / DSM 46492 / JCM 5070 / NBRC 14893 / NCIMB 12804 / NRRL 8165 / MA-4680).